A 227-amino-acid polypeptide reads, in one-letter code: Protein FdhD (227 aa).

210–215 (FARNGK) serves as a coordination point for Mo-bis(molybdopterin guanine dinucleotide).

It belongs to the FdhD family.

The protein resides in the cytoplasm. In terms of biological role, required for formate dehydrogenase (FDH) activity. The chain is Protein FdhD from Methanocaldococcus jannaschii (strain ATCC 43067 / DSM 2661 / JAL-1 / JCM 10045 / NBRC 100440) (Methanococcus jannaschii).